The sequence spans 194 residues: MEVILLERVAKLGQMGEVVKVKDGYARNFLLPRGKALRATADNKGKFEHMKADLEARNLAAKEEATKVAEKIDGRNVVVLRQASESGQLFGSVTVRDIIASFAADGIQISRSQVLLDMAVKTIGKHQIAIAVHPEVEVAVSVTVARSVDEAERINRGEDISTKREDKDAAAEAIAAAGEFFDPDAMHEDEATEQ.

It belongs to the bacterial ribosomal protein bL9 family.

Functionally, binds to the 23S rRNA. The polypeptide is Large ribosomal subunit protein bL9 (Rhodopseudomonas palustris (strain BisA53)).